The chain runs to 383 residues: tRNA-specific 2-thiouridylase MnmA (383 aa).

ATP contacts are provided by residues 9–16 and M35; that span reads GMSGGVDS. The segment at 95–97 is interaction with target base in tRNA; sequence NPD. C100 serves as the catalytic Nucleophile. Cysteines 100 and 198 form a disulfide. G124 is a binding site for ATP. The interval 148-150 is interaction with tRNA; the sequence is KDQ. The active-site Cysteine persulfide intermediate is the C198. The interval 310 to 311 is interaction with tRNA; sequence RY.

This sequence belongs to the MnmA/TRMU family.

It localises to the cytoplasm. It carries out the reaction S-sulfanyl-L-cysteinyl-[protein] + uridine(34) in tRNA + AH2 + ATP = 2-thiouridine(34) in tRNA + L-cysteinyl-[protein] + A + AMP + diphosphate + H(+). Catalyzes the 2-thiolation of uridine at the wobble position (U34) of tRNA, leading to the formation of s(2)U34. This is tRNA-specific 2-thiouridylase MnmA from Paraburkholderia phytofirmans (strain DSM 17436 / LMG 22146 / PsJN) (Burkholderia phytofirmans).